The following is a 512-amino-acid chain: Glutathione-binding protein GsiB (512 aa).

Positions 1–26 (MARAVHRSGLVALGIATALMASCAFA) are cleaved as a signal peptide.

The protein belongs to the bacterial solute-binding protein 5 family. In terms of assembly, the complex is composed of two ATP-binding proteins (GsiA), two transmembrane proteins (GsiC and GsiD) and a solute-binding protein (GsiB).

It localises to the periplasm. Functionally, part of the ABC transporter complex GsiABCD involved in glutathione import. Binds glutathione. This is Glutathione-binding protein GsiB from Shigella flexneri.